We begin with the raw amino-acid sequence, 344 residues long: Selenide, water dikinase (344 aa).

Residue C16 is part of the active site. ATP contacts are provided by residues K19 and 47 to 49; that span reads SRD. Residue D50 coordinates Mg(2+). Residues D67, D90, and 138-140 contribute to the ATP site; that span reads GHS. D90 is a binding site for Mg(2+). D226 contacts Mg(2+).

The protein belongs to the selenophosphate synthase 1 family. Class I subfamily. As to quaternary structure, homodimer. The cofactor is Mg(2+).

It carries out the reaction hydrogenselenide + ATP + H2O = selenophosphate + AMP + phosphate + 2 H(+). In terms of biological role, synthesizes selenophosphate from selenide and ATP. The chain is Selenide, water dikinase from Pseudomonas putida (strain ATCC 47054 / DSM 6125 / CFBP 8728 / NCIMB 11950 / KT2440).